We begin with the raw amino-acid sequence, 493 residues long: Glutathione hydrolase 6 (493 aa).

At 1–54 (MERAEEPVVYQKLLPWEPSLESEEEVEEEETSEALVLNPRRHQDSSRNKAGGLP) the chain is on the cytoplasmic side. The disordered stretch occupies residues 19–52 (SLESEEEVEEEETSEALVLNPRRHQDSSRNKAGG). The segment covering 20–32 (LESEEEVEEEETS) has biased composition (acidic residues). Residues 55–75 (GTWARVVAALLLLAVGCSLAV) form a helical; Signal-anchor for type II membrane protein membrane-spanning segment. The Extracellular portion of the chain corresponds to 76-493 (RQLQNQGRST…PHACCPFQGF (418 aa)). The tract at residues 83-105 (RSTGSLGSVAPPPGGHSHGPGVY) is disordered. N-linked (GlcNAc...) asparagine glycans are attached at residues Asn-161 and Asn-370. Low complexity predominate over residues 442–455 (PPTQAQHQHQGQQE). Positions 442–464 (PPTQAQHQHQGQQEPTEHPSTCG) are disordered.

The protein belongs to the gamma-glutamyltransferase family. Heterodimer composed of the light and heavy chains. The active site is located in the light chain. Post-translationally, cleaved by autocatalysis into a large and a small subunit and the autocatalytic cleavage is essential to the functional activation of the enzyme.

The protein resides in the membrane. It carries out the reaction an N-terminal (5-L-glutamyl)-[peptide] + an alpha-amino acid = 5-L-glutamyl amino acid + an N-terminal L-alpha-aminoacyl-[peptide]. The enzyme catalyses glutathione + H2O = L-cysteinylglycine + L-glutamate. The catalysed reaction is an S-substituted glutathione + H2O = an S-substituted L-cysteinylglycine + L-glutamate. It participates in sulfur metabolism; glutathione metabolism. Functionally, hydrolyzes and transfers gamma-glutamyl moieties from glutathione and other gamma-glutamyl compounds to acceptors. In Homo sapiens (Human), this protein is Glutathione hydrolase 6.